A 419-amino-acid chain; its full sequence is L-rhamnose isomerase (419 aa).

3 residues coordinate Mn(2+): His262, Asp294, and Asp296.

It belongs to the rhamnose isomerase family. Homotetramer. Mn(2+) serves as cofactor.

Its subcellular location is the cytoplasm. It catalyses the reaction L-rhamnopyranose = L-rhamnulose. It participates in carbohydrate degradation; L-rhamnose degradation; glycerone phosphate from L-rhamnose: step 1/3. Its function is as follows. Catalyzes the interconversion of L-rhamnose and L-rhamnulose. The chain is L-rhamnose isomerase from Shigella sonnei (strain Ss046).